Reading from the N-terminus, the 92-residue chain is Small ribosomal subunit protein uS19c (92 aa).

The protein belongs to the universal ribosomal protein uS19 family.

It localises to the plastid. It is found in the chloroplast. In terms of biological role, protein S19 forms a complex with S13 that binds strongly to the 16S ribosomal RNA. The polypeptide is Small ribosomal subunit protein uS19c (Cycas taitungensis (Prince sago)).